A 125-amino-acid chain; its full sequence is Large ribosomal subunit protein bL12 (125 aa).

In terms of assembly, homodimer. Part of the ribosomal stalk of the 50S ribosomal subunit. Forms a multimeric L10(L12)X complex, where L10 forms an elongated spine to which 2 to 4 L12 dimers bind in a sequential fashion. Binds GTP-bound translation factors. Post-translationally, two isoforms seem to exist. One is probably dimethylated on Lys-69 and monomethylated on Lys-86 while the other is probably acetylated or trimethylated on both Lys-86 and Lys-89.

Its function is as follows. Forms part of the ribosomal stalk which helps the ribosome interact with GTP-bound translation factors. Is thus essential for accurate translation. The protein is Large ribosomal subunit protein bL12 of Rhodopseudomonas palustris (strain ATCC BAA-98 / CGA009).